The primary structure comprises 290 residues: Glycine--tRNA ligase alpha subunit (290 aa).

Belongs to the class-II aminoacyl-tRNA synthetase family. As to quaternary structure, tetramer of two alpha and two beta subunits.

It is found in the cytoplasm. The enzyme catalyses tRNA(Gly) + glycine + ATP = glycyl-tRNA(Gly) + AMP + diphosphate. This is Glycine--tRNA ligase alpha subunit from Syntrophobacter fumaroxidans (strain DSM 10017 / MPOB).